The primary structure comprises 481 residues: Endonuclease Bax1 (481 aa).

Residues 1–136 (MLPWELARFS…EKKIIKAPTI (136 aa)) are N-terminal domain (NTD). Residues 158 to 250 (YKLTVYVSSN…LKLANFKELK (93 aa)) are central domain (CRD). The segment at 260 to 364 (DSSVEEKFYK…YKRKIDISLV (105 aa)) is nuclease domain (NUS). 3 residues coordinate a divalent metal cation: E265, D297, and E310. A C-terminal domain (CTD) region spans residues 414-481 (PGYIFLKNYY…AIVIKDKKVN (68 aa)).

It belongs to the Bax1 family. In terms of assembly, homodimer in solution, forms a heterodimer with XPB2. Requires a divalent metal cation as cofactor.

Functionally, a dual DNA endonuclease probably involved in nucleotide excision repair (NER). The N-terminal nuclease domain (NTD) of the XPB2-Bax1 complex cleaves on one side of a DNA bubble (which presumably mimics DNA damage), while the NUS nuclease domain cleaves the other side, respectively called 5' and 3' nuclease activities. Interaction with XPB blocks the NTD nuclease activity. Binds to and stimulates the ATPase activity (and probably also helicase activity) of XPB2. Increases affinity of XPB2 for forked DNA. Does not stimulate the DNA-dependent activity of XPB1. In an XPB2-Bax1-bubble DNA crystal (12 bp of dsDNA, a 6 base bubble and 6 bp of dsDNA) the short 6 bp arm is unwound. The 2 helicase and the ThM domains of XPB2 with the NTD and CRD domains of Bax1 encircle the DNA, forming a tunnel where the 12 bp dsDNA and the ds-ssDNA junction are located. The ThM domain is wedged between the ssDNA tails, with the 5' ssDNA contacting Bax1 and the 3' ssDNA in a channel in XPB2. The nuclease domain (NUS) of Bax1 does not contact DNA in the bubble DNA complex. This is Endonuclease Bax1 from Sulfurisphaera tokodaii (strain DSM 16993 / JCM 10545 / NBRC 100140 / 7) (Sulfolobus tokodaii).